Consider the following 254-residue polypeptide: Ribosomal RNA small subunit methyltransferase J (254 aa).

S-adenosyl-L-methionine is bound by residues 107–108 (RD), 123–124 (ER), and D174.

This sequence belongs to the methyltransferase superfamily. RsmJ family.

It is found in the cytoplasm. The catalysed reaction is guanosine(1516) in 16S rRNA + S-adenosyl-L-methionine = N(2)-methylguanosine(1516) in 16S rRNA + S-adenosyl-L-homocysteine + H(+). Specifically methylates the guanosine in position 1516 of 16S rRNA. The protein is Ribosomal RNA small subunit methyltransferase J of Coxiella burnetii (strain Dugway 5J108-111).